The chain runs to 503 residues: MEFSVKSGSPEKQRSACIVVGVFEPRRLSPVAEQLDKISDGYISSLLRRGDLEGKPGQMLLLHQVPGVLSERVLLVGCGKERELGERQYKEIIQKTINTLNETGSMEAVCFLTELHVKGRDTYWKVRQAVEATKDGLYIFDQFKSVKPEIRRPLRKLVFNVPTRRELNLGERAITHGLAISSGVKACKDLGNMPPNIANPAYLASQARRLADDYESITTKIIGEEEMEKLGMASYLAVGRGSRNESMMSVIEYKGNPDPEAKPIVLVGKGLTFDSGGISLKPGEGMDEMKYDMCGAASVFGTMKAIAKLGLPLNVIGVLAGCENMPGSNAYRPGDILTTMSGQTVEVLNTDAEGRLVLCDVLTYVERFEPECVVDVATLTGACVIALGHHISAVMSNHNPLAHELVNASEQSSDRAWRLPLADEYHEQLKSPFADMANIGGRPGGAITAACFLSKFAKKYNWAHLDIAGTAWKSGAAKGSTGRPVSLLVQFLLNRSGGLDAEE.

Lys-269 and Asp-274 together coordinate Mn(2+). Lys-281 is an active-site residue. Mn(2+) is bound by residues Asp-292, Asp-351, and Glu-353. Arg-355 is an active-site residue.

It belongs to the peptidase M17 family. Mn(2+) is required as a cofactor.

The protein resides in the cytoplasm. It carries out the reaction Release of an N-terminal amino acid, Xaa-|-Yaa-, in which Xaa is preferably Leu, but may be other amino acids including Pro although not Arg or Lys, and Yaa may be Pro. Amino acid amides and methyl esters are also readily hydrolyzed, but rates on arylamides are exceedingly low.. The catalysed reaction is Release of an N-terminal amino acid, preferentially leucine, but not glutamic or aspartic acids.. Presumably involved in the processing and regular turnover of intracellular proteins. Catalyzes the removal of unsubstituted N-terminal amino acids from various peptides. The protein is Cytosol aminopeptidase of Vibrio cholerae serotype O1 (strain ATCC 39541 / Classical Ogawa 395 / O395).